The sequence spans 502 residues: Cytochrome P450 monooxygenase AacuE (502 aa).

The chain crosses the membrane as a helical span at residues 4–26 (AITGLVATVTTFLAYIVFLSYTP). N-linked (GlcNAc...) asparagine glycosylation occurs at Asn393. Cys439 contributes to the heme binding site.

It belongs to the cytochrome P450 family. It depends on heme as a cofactor.

The protein localises to the membrane. The protein operates within secondary metabolite biosynthesis. Its function is as follows. Cytochrome P450 monooxygenase; part of the gene cluster that mediates the biosynthesis of the tetrahydroxanthone dimer secalonic acid D. The pathway begins with the synthesis of atrochrysone thioester by the polyketide synthase AacuL. The atrochrysone carboxyl ACP thioesterase AacuM then breaks the thioester bond and releases the atrochrysone carboxylic acid from AacuL. Atrochrysone carboxylic acid is decarboxylated by the decarboxylase AacuI, and oxidized by the anthrone oxygenase AacuG to yield emodin. Emodin is then reduced to emodin hydroquinone by a yet unidentified oxidoreductase. A-ring reduction by the short chain dehydrogenase AacuN, dehydration by the scytalone dehydratase-like protein AacuK and probable spontaneous re-oxidation, results in overall deoxygenation to chrysophanol. Baeyer-Villiger oxidation by the Baeyer-Villiger monooxygenase (BVMO) AacuH then yields monodictyphenone. Monodictyphenone is transformed into compounds with the tetrahydroxanthone skeleton via methylesterification by the methyltransferase AacuQ, followed by the action of the flavin-dependent monooxygenase AacuC, the isomerase AacuP, and the short chain dehydrogenase/reductase AacuF or AacuD. AacuF and AacuD should accept the same compound as a substrate but perform the ketoreduction with a different stereoselectivity, thus yielding blennolides B and A, respectively. In the final step of the biosynthesis, the cytochrome P450 monooxygenase AacuE accepts blennolide B and/or blennolide A to conduct the dimerization reaction to furnish the tetrahydroxanthone dimers, secalonic acids D, B, and F. This chain is Cytochrome P450 monooxygenase AacuE, found in Aspergillus aculeatus (strain ATCC 16872 / CBS 172.66 / WB 5094).